The primary structure comprises 279 residues: Acetylglutamate kinase (279 aa).

Substrate-binding positions include 64-65 (GG), arginine 86, and asparagine 177.

Belongs to the acetylglutamate kinase family. ArgB subfamily.

It is found in the cytoplasm. It carries out the reaction N-acetyl-L-glutamate + ATP = N-acetyl-L-glutamyl 5-phosphate + ADP. The protein operates within amino-acid biosynthesis; L-arginine biosynthesis; N(2)-acetyl-L-ornithine from L-glutamate: step 2/4. In terms of biological role, catalyzes the ATP-dependent phosphorylation of N-acetyl-L-glutamate. This Campylobacter jejuni subsp. jejuni serotype O:6 (strain 81116 / NCTC 11828) protein is Acetylglutamate kinase.